Reading from the N-terminus, the 89-residue chain is YcgL domain-containing protein Asuc_1390 (89 aa).

Residues 1-85 form the YcgL domain; that stretch reads MLCAIYKSKK…KDDWLFTIEK (85 aa).

The polypeptide is YcgL domain-containing protein Asuc_1390 (Actinobacillus succinogenes (strain ATCC 55618 / DSM 22257 / CCUG 43843 / 130Z)).